Reading from the N-terminus, the 431-residue chain is Enolase (431 aa).

Gln167 is a binding site for (2R)-2-phosphoglycerate. Glu209 acts as the Proton donor in catalysis. The Mg(2+) site is built by Asp246, Glu289, and Asp316. (2R)-2-phosphoglycerate is bound by residues Lys341, Arg370, Ser371, and Lys392. Lys341 functions as the Proton acceptor in the catalytic mechanism.

This sequence belongs to the enolase family. As to quaternary structure, component of the RNA degradosome, a multiprotein complex involved in RNA processing and mRNA degradation. The cofactor is Mg(2+).

The protein localises to the cytoplasm. Its subcellular location is the secreted. It is found in the cell surface. The catalysed reaction is (2R)-2-phosphoglycerate = phosphoenolpyruvate + H2O. It functions in the pathway carbohydrate degradation; glycolysis; pyruvate from D-glyceraldehyde 3-phosphate: step 4/5. Its function is as follows. Catalyzes the reversible conversion of 2-phosphoglycerate (2-PG) into phosphoenolpyruvate (PEP). It is essential for the degradation of carbohydrates via glycolysis. This chain is Enolase, found in Shewanella baltica (strain OS223).